The following is a 253-amino-acid chain: Imidazole glycerol phosphate synthase subunit HisF (253 aa).

Residues Asp-11 and Asp-130 contribute to the active site.

It belongs to the HisA/HisF family. Heterodimer of HisH and HisF.

It localises to the cytoplasm. The catalysed reaction is 5-[(5-phospho-1-deoxy-D-ribulos-1-ylimino)methylamino]-1-(5-phospho-beta-D-ribosyl)imidazole-4-carboxamide + L-glutamine = D-erythro-1-(imidazol-4-yl)glycerol 3-phosphate + 5-amino-1-(5-phospho-beta-D-ribosyl)imidazole-4-carboxamide + L-glutamate + H(+). It functions in the pathway amino-acid biosynthesis; L-histidine biosynthesis; L-histidine from 5-phospho-alpha-D-ribose 1-diphosphate: step 5/9. Functionally, IGPS catalyzes the conversion of PRFAR and glutamine to IGP, AICAR and glutamate. The HisF subunit catalyzes the cyclization activity that produces IGP and AICAR from PRFAR using the ammonia provided by the HisH subunit. The polypeptide is Imidazole glycerol phosphate synthase subunit HisF (Dinoroseobacter shibae (strain DSM 16493 / NCIMB 14021 / DFL 12)).